We begin with the raw amino-acid sequence, 439 residues long: CBL-interacting serine/threonine-protein kinase 20 (439 aa).

Residues 12–266 (YELGRLLGQG…IEKIMENSWF (255 aa)) enclose the Protein kinase domain. ATP is bound by residues 18 to 26 (LGQGTFAKV) and lysine 41. Residue aspartate 134 is the Proton acceptor of the active site. Residues 152–181 (DFGLSALRESKQQDGLLHTTCGTPAYVAPE) are activation loop. Phosphoserine is present on serine 156. A Phosphothreonine modification is found at threonine 170. An NAF domain is found at 297–322 (VKPMSYNAFDLISSLSQGFDLSGLFE). Residues 326 to 356 (RSESKFTTKKDAKEIVSKFEEIATSSERFNL) are PPI.

It belongs to the protein kinase superfamily. CAMK Ser/Thr protein kinase family. SNF1 subfamily. Mn(2+) is required as a cofactor. Post-translationally, autophosphorylated. As to expression, confined to mature leaves.

The catalysed reaction is L-seryl-[protein] + ATP = O-phospho-L-seryl-[protein] + ADP + H(+). The enzyme catalyses L-threonyl-[protein] + ATP = O-phospho-L-threonyl-[protein] + ADP + H(+). In terms of biological role, CIPK serine-threonine protein kinases interact with CBL proteins. Binding of a CBL protein to the regulatory NAF domain of CIPK protein lead to the activation of the kinase in a calcium-dependent manner. Required for the abscisic acid-mediated (ABA) signaling pathway involved in seed germination and growth elongation inhibition. This chain is CBL-interacting serine/threonine-protein kinase 20 (CIPK20), found in Arabidopsis thaliana (Mouse-ear cress).